We begin with the raw amino-acid sequence, 248 residues long: Glycoprotein BILF2 (248 aa).

Residues 1–17 form the signal peptide; that stretch reads MTHLVLLLCCCVGSVCA. The Ig-like domain occupies 19 to 125; the sequence is FSDLVKFENV…NVTLRNCSVA (107 aa). Asn27, Asn37, Asn45, Asn73, Asn83, Asn92, Asn95, Asn104, Asn116, Asn121, Asn131, and Asn144 each carry an N-linked (GlcNAc...) asparagine; by host glycan. The cysteines at positions 40 and 115 are disulfide-linked. Residues 167–191 are disordered; it reads VSHTTSTSHRPHRRPVSKRPTHKPV. Positions 175-188 are enriched in basic residues; it reads HRPHRRPVSKRPTH. Residues 210–230 form a helical membrane-spanning segment; that stretch reads WALLLITCAVVAPVLLIIIIS.

This sequence belongs to the Epstein-Barr virus BILF2 protein family.

It is found in the membrane. This chain is Glycoprotein BILF2, found in Epstein-Barr virus (strain B95-8) (HHV-4).